Reading from the N-terminus, the 237-residue chain is Methylthioribulose-1-phosphate dehydratase (237 aa).

Residue C97 coordinates substrate. Positions 114 and 116 each coordinate Zn(2+). E143 acts as the Proton donor/acceptor in catalysis. Zn(2+) is bound at residue H199.

This sequence belongs to the aldolase class II family. MtnB subfamily. The cofactor is Zn(2+).

The protein resides in the cytoplasm. The catalysed reaction is 5-(methylsulfanyl)-D-ribulose 1-phosphate = 5-methylsulfanyl-2,3-dioxopentyl phosphate + H2O. The protein operates within amino-acid biosynthesis; L-methionine biosynthesis via salvage pathway; L-methionine from S-methyl-5-thio-alpha-D-ribose 1-phosphate: step 2/6. Functionally, catalyzes the dehydration of methylthioribulose-1-phosphate (MTRu-1-P) into 2,3-diketo-5-methylthiopentyl-1-phosphate (DK-MTP-1-P). The protein is Methylthioribulose-1-phosphate dehydratase of Coccidioides posadasii (strain C735) (Valley fever fungus).